The following is an 81-amino-acid chain: Protein Vpu (81 aa).

Topologically, residues 1–7 (MQSLQVL) are extracellular. The chain crosses the membrane as a helical span at residues 8 to 28 (AIVALVVATIIAIVVWTIVFI). Residues 29–81 (EYRKILRQRKIDRLINRITERAEDSGNESDGDQEELSALVERGHLAPWDVDDL) are Cytoplasmic-facing. A disordered region spans residues 50–81 (AEDSGNESDGDQEELSALVERGHLAPWDVDDL). 2 positions are modified to phosphoserine; by host CK2: Ser-53 and Ser-57. A compositionally biased stretch (acidic residues) spans 53–63 (SGNESDGDQEE).

It belongs to the HIV-1 VPU protein family. As to quaternary structure, homopentamer. Interacts with host CD4 and BRTC; these interactions induce proteasomal degradation of CD4. Interacts with host BST2; this interaction leads to the degradation of host BST2. Interacts with host FBXW11. Interacts with host AP1M1; this interaction plays a role in the mistrafficking and subsequent degradation of host BST2. Interacts with host RANBP2; this interaction allows Vpu to down-regulate host BLM sumoylation. Post-translationally, phosphorylated by host CK2. This phosphorylation is necessary for interaction with human BTRC and degradation of CD4.

Its subcellular location is the host membrane. Ion channel activity is inhibited by hexamethylene amiloride in vitro. Its function is as follows. Enhances virion budding by targeting host CD4 and Tetherin/BST2 to proteasome degradation. Degradation of CD4 prevents any unwanted premature interactions between viral Env and its host receptor CD4 in the endoplasmic reticulum. Degradation of antiretroviral protein Tetherin/BST2 is important for virion budding, as BST2 tethers new viral particles to the host cell membrane. Mechanistically, Vpu bridges either CD4 or BST2 to BTRC, a substrate recognition subunit of the Skp1/Cullin/F-box protein E3 ubiquitin ligase, induces their ubiquitination and subsequent proteasomal degradation. The alteration of the E3 ligase specificity by Vpu seems to promote the degradation of host IKBKB, leading to NF-kappa-B down-regulation and subsequent apoptosis. Acts as a viroporin that forms an oligomeric ion channel in membranes. Modulates the host DNA repair mechanisms to promote degradation of nuclear viral cDNA in cells that are already productively infected in order to suppress immune sensing and proviral hyper-integration (superinfection). Manipulates PML-NBs and modulates SUMOylation of host BLM protein thereby enhancing its DNA-end processing activity toward viral unintegrated linear DNA. Also inhibits RAD52-mediated homologous repair of viral cDNA, preventing the generation of dead-end circular forms of single copies of the long terminal repeat and permitting sustained nucleolytic attack. This Human immunodeficiency virus type 1 group M subtype B (isolate YU-2) (HIV-1) protein is Protein Vpu.